Here is a 162-residue protein sequence, read N- to C-terminus: Phosphopantetheine adenylyltransferase (162 aa).

Ser-9 contributes to the substrate binding site. ATP is bound by residues 9–10 (SF) and His-17. The substrate site is built by Lys-41, Ile-77, and Lys-91. Residues 92–94 (GLR), Glu-102, and 126–132 (YAFLSSS) each bind ATP.

The protein belongs to the bacterial CoaD family. As to quaternary structure, homohexamer. Mg(2+) is required as a cofactor.

Its subcellular location is the cytoplasm. The catalysed reaction is (R)-4'-phosphopantetheine + ATP + H(+) = 3'-dephospho-CoA + diphosphate. It participates in cofactor biosynthesis; coenzyme A biosynthesis; CoA from (R)-pantothenate: step 4/5. Reversibly transfers an adenylyl group from ATP to 4'-phosphopantetheine, yielding dephospho-CoA (dPCoA) and pyrophosphate. This chain is Phosphopantetheine adenylyltransferase, found in Frankia casuarinae (strain DSM 45818 / CECT 9043 / HFP020203 / CcI3).